A 780-amino-acid polypeptide reads, in one-letter code: ATP-dependent 6-phosphofructokinase, muscle type (780 aa).

An N-acetylthreonine modification is found at T2. Residues 2–390 form an N-terminal catalytic PFK domain 1 region; the sequence is THEEHHAAKT…NWEVYKLLAH (389 aa). ATP contacts are provided by residues G25, 88 to 89, and 118 to 121; these read RC and GDGS. A Mg(2+)-binding site is contributed by D119. S133 is subject to Phosphoserine. Residues 164–166, R201, 208–210, E264, R292, and 298–301 each bind substrate; these read SID, MGR, and HVQR. The Proton acceptor role is filled by D166. S377 carries the phosphoserine modification. The segment at 391–401 is interdomain linker; it reads VRPPVSKGGLH. The interval 402–780 is C-terminal regulatory PFK domain 2; it reads TVAVMNVGAP…SRKRSGEAAV (379 aa). Residues R471 and 528–532 each bind beta-D-fructose 2,6-bisphosphate; that span reads TVSNN. S530 is a glycosylation site (O-linked (GlcNAc) serine). Position 557 is an N6-(2-hydroxyisobutyryl)lysine (K557). Beta-D-fructose 2,6-bisphosphate is bound by residues R566, 573 to 575, E629, R655, and 661 to 664; these read MGG and HMQQ. S667 carries the post-translational modification Phosphoserine. R735 contributes to the beta-D-fructose 2,6-bisphosphate binding site. S775 is subject to Phosphoserine.

The protein belongs to the phosphofructokinase type A (PFKA) family. ATP-dependent PFK group I subfamily. Eukaryotic two domain clade 'E' sub-subfamily. As to quaternary structure, homo- and heterotetramers. Phosphofructokinase (PFK) enzyme functions as a tetramer composed of different combinations of 3 types of subunits, called PFKM (M), PFKL (L) and PFKP (P). The composition of the PFK tetramer differs according to the tissue type it is present in. The kinetic and regulatory properties of the tetrameric enzyme are dependent on the subunit composition, hence can vary across tissues. Isoform 2 and isoform 3 interact (via N-terminal testis-specific region) with GSTM5. Isoform 2 and isoform 3 interact (via C-terminus) with HK1 (via N-terminal spermatogenic cell-specific region). Mg(2+) serves as cofactor. Post-translationally, glcNAcylation decreases enzyme activity. Isoform 1 is expressed in skeletal muscle (at protein level). Isoform 2 and isoform 3 are testis-specific and are detected in quiescent sperm (at protein level). They are first detected in the cytoplasm of round spermatids and subsequently in the flagellum of elongated spermatids extending into the seminiferous tubule lumen (at protein level). Isoform 2 is expressed at higher level than isoform 3 in testis.

The protein resides in the cytoplasm. The protein localises to the cell projection. Its subcellular location is the cilium. It localises to the flagellum. The enzyme catalyses beta-D-fructose 6-phosphate + ATP = beta-D-fructose 1,6-bisphosphate + ADP + H(+). It functions in the pathway carbohydrate degradation; glycolysis; D-glyceraldehyde 3-phosphate and glycerone phosphate from D-glucose: step 3/4. With respect to regulation, allosterically activated by ADP, AMP, or fructose 2,6-bisphosphate, and allosterically inhibited by ATP or citrate. Its function is as follows. Catalyzes the phosphorylation of D-fructose 6-phosphate to fructose 1,6-bisphosphate by ATP, the first committing step of glycolysis. The chain is ATP-dependent 6-phosphofructokinase, muscle type (Pfkm) from Mus musculus (Mouse).